Reading from the N-terminus, the 67-residue chain is Alpha-conotoxin G1.5 (67 aa).

Residues 1-21 form the signal peptide; the sequence is MGMRMMFTVFLLVALATTVVS. The propeptide occupies 22 to 47; that stretch reads FTSDRASDRRNAAVKAFDLISSTVKK. 2 cysteine pairs are disulfide-bonded: cysteine 49–cysteine 55 and cysteine 50–cysteine 63. Residue glutamine 65 is modified to Glutamine amide.

Belongs to the conotoxin A superfamily. Expressed by the venom duct.

Its subcellular location is the secreted. In terms of biological role, alpha-conotoxins act on postsynaptic membranes, they bind to the nicotinic acetylcholine receptors (nAChR) and thus inhibit them. Globular isomer (C1-C3; C2-C4) selectively inhibits neuronal (non-muscle) nAChR subtypes particularly human alpha-3-beta-2/CHRNA3-CHRNB2 (IC(50)=35.7 nM) and alpha-9-alpha-10/CHRNA9-CHRNA10 nAChRs (IC(50)=569 nM), while the ribbon isomer (C1-C4; C2-C3) shows weak inhibition on alpha-3-beta-2/CHRNA3-CHRNB2, but not on all other receptors tested. This chain is Alpha-conotoxin G1.5, found in Conus geographus (Geography cone).